A 710-amino-acid polypeptide reads, in one-letter code: Dihydroxyacetone synthase (710 aa).

Thiamine diphosphate is bound by residues His-78 and Gly-128–Leu-130. Positions 169, 199, and 201 each coordinate Mg(2+). Asn-199 is a binding site for thiamine diphosphate. The thiamine diphosphate site is built by His-275, Glu-433, and Phe-461. Glu-433 functions as the Proton donor in the catalytic mechanism. The Microbody targeting signal signature appears at Asn-708 to Leu-710.

This sequence belongs to the transketolase family. Requires Mg(2+) as cofactor. Ca(2+) is required as a cofactor. It depends on Mn(2+) as a cofactor. The cofactor is Co(2+). Thiamine diphosphate serves as cofactor.

It localises to the peroxisome. It catalyses the reaction D-xylulose 5-phosphate + formaldehyde = dihydroxyacetone + D-glyceraldehyde 3-phosphate. Its function is as follows. This is the major methanol assimilatory enzyme from the methylotrophic Hansenula polymorpha. This Pichia angusta (Yeast) protein is Dihydroxyacetone synthase (DAS).